Consider the following 179-residue polypeptide: Large ribosomal subunit protein uL5 (179 aa).

The protein belongs to the universal ribosomal protein uL5 family. As to quaternary structure, part of the 50S ribosomal subunit; part of the 5S rRNA/L5/L18/L25 subcomplex. Contacts the 5S rRNA and the P site tRNA. Forms a bridge to the 30S subunit in the 70S ribosome.

This is one of the proteins that bind and probably mediate the attachment of the 5S RNA into the large ribosomal subunit, where it forms part of the central protuberance. In the 70S ribosome it contacts protein S13 of the 30S subunit (bridge B1b), connecting the 2 subunits; this bridge is implicated in subunit movement. Contacts the P site tRNA; the 5S rRNA and some of its associated proteins might help stabilize positioning of ribosome-bound tRNAs. The chain is Large ribosomal subunit protein uL5 from Photobacterium profundum (strain SS9).